Here is a 449-residue protein sequence, read N- to C-terminus: Tubulin beta-6 chain (449 aa).

Gln-11, Glu-69, Ser-138, Gly-142, Thr-143, Gly-144, Asn-204, and Asn-226 together coordinate GTP. Glu-69 lines the Mg(2+) pocket. Positions 425–449 (YQDATADDEGEYEEDEDEEEILDHE) are disordered. Over residues 429 to 449 (TADDEGEYEEDEDEEEILDHE) the composition is skewed to acidic residues.

It belongs to the tubulin family. Dimer of alpha and beta chains. A typical microtubule is a hollow water-filled tube with an outer diameter of 25 nm and an inner diameter of 15 nM. Alpha-beta heterodimers associate head-to-tail to form protofilaments running lengthwise along the microtubule wall with the beta-tubulin subunit facing the microtubule plus end conferring a structural polarity. Microtubules usually have 13 protofilaments but different protofilament numbers can be found in some organisms and specialized cells. Requires Mg(2+) as cofactor.

Its subcellular location is the cytoplasm. The protein resides in the cytoskeleton. Tubulin is the major constituent of microtubules, a cylinder consisting of laterally associated linear protofilaments composed of alpha- and beta-tubulin heterodimers. Microtubules grow by the addition of GTP-tubulin dimers to the microtubule end, where a stabilizing cap forms. Below the cap, tubulin dimers are in GDP-bound state, owing to GTPase activity of alpha-tubulin. The sequence is that of Tubulin beta-6 chain (TUBB6) from Arabidopsis thaliana (Mouse-ear cress).